We begin with the raw amino-acid sequence, 539 residues long: Sorting nexin-27 (539 aa).

The tract at residues 1 to 40 (MADEDGEGIHPSAPHRNGGGGGGSGLHCAGNGGGGGGGPR) is disordered. A compositionally biased stretch (gly residues) spans 17 to 39 (NGGGGGGSGLHCAGNGGGGGGGP). Residues 41–134 (VVRIVKSESG…ELILTVLSVP (94 aa)) form the PDZ domain. 2 positions are modified to phosphoserine: serine 49 and serine 60. The PX domain maps to 159-267 (QAVPISVPTY…EFLSESDENY (109 aa)). Positions 271–360 (SDVELRVALP…TCLTIRKWLF (90 aa)) constitute a Ras-associating domain. Residues 271 to 360 (SDVELRVALP…TCLTIRKWLF (90 aa)) are FERM-like region F1. The interval 371–419 (NDLAVTYFFHQAVDDVKKGYIKAEEKSYQLQKLHEQRKMVMYLNMLRTC) is FERM-like region F2. An FERM-like region F3 region spans residues 423-523 (NEIIFPHCAC…RVFCELKWRK (101 aa)).

As to quaternary structure, core component of the SNX27-retromer, a multiprotein complex composed of SNX27, the WASH complex and the retromer complex. Interacts (via the FERM-like regions) with the WASH complex. Interacts with SNX1. Interacts with CYTIP. Interacts with DGKZ. Interacts with MCC. Interacts (via PDZ domain) with a number of target transmembrane proteins (via PDZ-binding motif): ABCC4, ADRB2, ARHGEF7, GRIA1, GRIA2, GRIN1, GRIN2A GRIN2C, KCNJ6, KCNJ9 and SLC2A1/GLUT1. Interacts (via PDZ domains) with SLC9A3; directs SLC9A3 membrane insertion from early endosomes to the plasma membrane. As to expression, expressed in cells of hematopoietic origin.

The protein resides in the early endosome membrane. Its subcellular location is the cytoplasm. It localises to the cytosol. Involved in the retrograde transport from endosome to plasma membrane, a trafficking pathway that promotes the recycling of internalized transmembrane proteins. Following internalization, endocytosed transmembrane proteins are delivered to early endosomes and recycled to the plasma membrane instead of being degraded in lysosomes. SNX27 specifically binds and directs sorting of a subset of transmembrane proteins containing a PDZ-binding motif at the C-terminus: following interaction with target transmembrane proteins, associates with the retromer complex, preventing entry into the lysosomal pathway, and promotes retromer-tubule based plasma membrane recycling. SNX27 also binds with the WASH complex. Interacts with membranes containing phosphatidylinositol-3-phosphate (PtdIns(3P)). May participate in establishment of natural killer cell polarity. Recruits CYTIP to early endosomes. This chain is Sorting nexin-27 (Snx27), found in Mus musculus (Mouse).